The following is a 955-amino-acid chain: Anion exchange protein 4 (955 aa).

3 disordered regions span residues Val20–Pro50, His154–Gln190, and Pro331–Gln352. 4 helical membrane passes run Ala387 to Gly407, Gly415 to Gly435, Val472 to Val492, and Phe503 to Ala523. Residues Ala387–Asn955 are membrane (anion exchange). 2 N-linked (GlcNAc...) asparagine glycosylation sites follow: Asn548 and Asn572. Transmembrane regions (helical) follow at residues Val596 to Ala616, Phe637 to Met657, Pro684 to Met704, Leu730 to Ser750, Leu785 to Leu804, Val811 to Met830, and Leu871 to Val891. The segment at Arg918 to Asn955 is disordered. An N-linked (GlcNAc...) asparagine glycan is attached at Asn951.

It belongs to the anion exchanger (TC 2.A.31) family. Highly expressed in kidney. Expressed in the outer medulla and the inner medulla in the kidney cortex. Only expressed in beta-intercalated cells.

It is found in the lateral cell membrane. The protein localises to the apical cell membrane. It localises to the basolateral cell membrane. The catalysed reaction is 2 hydrogencarbonate(out) + chloride(in) + Na(+)(out) = 2 hydrogencarbonate(in) + chloride(out) + Na(+)(in). It carries out the reaction K(+)(in) + 2 hydrogencarbonate(in) + chloride(out) = K(+)(out) + 2 hydrogencarbonate(out) + chloride(in). The enzyme catalyses Li(+)(in) + 2 hydrogencarbonate(in) + chloride(out) = Li(+)(out) + 2 hydrogencarbonate(out) + chloride(in). It catalyses the reaction Rb(+)(in) + 2 hydrogencarbonate(in) + chloride(out) = Rb(+)(out) + 2 hydrogencarbonate(out) + chloride(in). The catalysed reaction is Cs(+)(in) + 2 hydrogencarbonate(in) + chloride(out) = Cs(+)(out) + 2 hydrogencarbonate(out) + chloride(in). Electroneutral Cl(-)/HCO3(-) antiporter that favors chloride ion entry and efflux of hydrogencarbonate and sodium ion across the basolateral membrane and may participat in salivary secretion. Also mediates Cl(-)/HCO3(-) exchange activity in the presence of K(+) as well as Cs(+), Li(+), and Rb(+). Does not contribute to Cl(-)/HCO3(-) exchanger in the apical membrane of the upper villous epithelium. This chain is Anion exchange protein 4, found in Oryctolagus cuniculus (Rabbit).